A 431-amino-acid polypeptide reads, in one-letter code: Histidinol dehydrogenase (431 aa).

Residues Y127, Q189, and N212 each contribute to the NAD(+) site. Substrate-binding residues include S237, Q259, and H262. The Zn(2+) site is built by Q259 and H262. Residues E326 and H327 each act as proton acceptor in the active site. Positions 327, 360, 414, and 419 each coordinate substrate. Residue D360 coordinates Zn(2+). H419 is a Zn(2+) binding site.

The protein belongs to the histidinol dehydrogenase family. The cofactor is Zn(2+).

It carries out the reaction L-histidinol + 2 NAD(+) + H2O = L-histidine + 2 NADH + 3 H(+). Its pathway is amino-acid biosynthesis; L-histidine biosynthesis; L-histidine from 5-phospho-alpha-D-ribose 1-diphosphate: step 9/9. Functionally, catalyzes the sequential NAD-dependent oxidations of L-histidinol to L-histidinaldehyde and then to L-histidine. The sequence is that of Histidinol dehydrogenase from Xanthomonas euvesicatoria pv. vesicatoria (strain 85-10) (Xanthomonas campestris pv. vesicatoria).